The sequence spans 138 residues: Cellular retinoic acid-binding protein 2 (138 aa).

Positions Lys21 to Lys31 match the Nuclear localization signal motif. A Glycyl lysine isopeptide (Lys-Gly) (interchain with G-Cter in SUMO) cross-link involves residue Lys102. Arg133–Tyr135 serves as a coordination point for all-trans-retinoate.

Belongs to the calycin superfamily. Fatty-acid binding protein (FABP) family. In terms of assembly, interacts with importin alpha. Interacts with RXR and RARA. Sumoylated in response to retinoic acid binding, sumoylation is critical for dissociation from ER and subsequent nuclear translocation. In terms of tissue distribution, embryo and skin of adult mouse.

It is found in the cytoplasm. Its subcellular location is the endoplasmic reticulum. The protein resides in the nucleus. Transports retinoic acid to the nucleus. Regulates the access of retinoic acid to the nuclear retinoic acid receptors. The protein is Cellular retinoic acid-binding protein 2 (Crabp2) of Mus musculus (Mouse).